Reading from the N-terminus, the 1630-residue chain is Histone transcription regulator 3 homolog (1630 aa).

The TPR 1 repeat unit spans residues 8–42; that stretch reads NAASEDLDKEKRTLEIRIEEAVQIYQNALSAQKQG. Positions 325-347 are disordered; that stretch reads KDIVPPPSDNLPKPQLLKRPIDD. One copy of the TPR 2 repeat lies at 1230 to 1263; it reads WRALYMLGKACRKCGDMENALVHFEAAAALAPTK.

It belongs to the HIR3 family. As to quaternary structure, interacts with hip1 and slm9.

Its subcellular location is the nucleus. Has a role in a nucleosome assembly pathway that is required for the integrity of heterochromatin and proper chromosome segregation. Required for transcriptional silencing in the outer repeat (otr) region of centromeric repeats and the Tf2 long terminal repeat retrotransposons. This chain is Histone transcription regulator 3 homolog (hip3), found in Schizosaccharomyces pombe (strain 972 / ATCC 24843) (Fission yeast).